We begin with the raw amino-acid sequence, 205 residues long: uncharacterized protein (205 aa).

This sequence belongs to the flavoredoxin family. FMN is required as a cofactor.

This is an uncharacterized protein from Bacillus subtilis (strain 168).